The primary structure comprises 339 residues: Uroporphyrinogen decarboxylase (339 aa).

Substrate is bound by residues 23–27 (RQAGR), Asp72, Tyr147, Ser202, and His315.

The protein belongs to the uroporphyrinogen decarboxylase family. As to quaternary structure, homodimer.

It localises to the cytoplasm. It carries out the reaction uroporphyrinogen III + 4 H(+) = coproporphyrinogen III + 4 CO2. It participates in porphyrin-containing compound metabolism; protoporphyrin-IX biosynthesis; coproporphyrinogen-III from 5-aminolevulinate: step 4/4. Its function is as follows. Catalyzes the decarboxylation of four acetate groups of uroporphyrinogen-III to yield coproporphyrinogen-III. The chain is Uroporphyrinogen decarboxylase from Desulfotalea psychrophila (strain LSv54 / DSM 12343).